The following is a 952-amino-acid chain: Lysosomal alpha-glucosidase (952 aa).

A signal peptide spans 1–27 (MGVRHPPCSHRLLAVCALVSLATAALL). A propeptide spanning residues 28–69 (GHILLHDFLLVPRELSGSSPVLEETHPAHQQGASRPGPRDAQ) is cleaved from the precursor. The disordered stretch occupies residues 47–82 (PVLEETHPAHQQGASRPGPRDAQAHPGRPRAVPTQC). In terms of domain architecture, P-type spans 80 to 131 (TQCDVPPNSRFDCAPDKAITQEQCEARGCCYIPAKQGLQGAQMGQPWCFFPP). Disulfide bonds link Cys82–Cys109, Cys92–Cys108, and Cys103–Cys127. 3 N-linked (GlcNAc...) asparagine glycosylation sites follow: Asn140, Asn233, and Asn390. Asp404 contacts substrate. The N-linked (GlcNAc...) asparagine glycan is linked to Asn470. Asp518 serves as the catalytic Nucleophile. Glu521 is a catalytic residue. Cys533 and Cys558 are oxidised to a cystine. Substrate contacts are provided by Arg600 and Asp616. Cys647 and Cys658 are joined by a disulfide. Asn652 carries N-linked (GlcNAc...) asparagine glycosylation. His674 is a substrate binding site. Asn882 and Asn925 each carry an N-linked (GlcNAc...) asparagine glycan.

This sequence belongs to the glycosyl hydrolase 31 family. The different forms of acid glucosidase are obtained by proteolytic processing. In terms of processing, phosphorylation of mannose residues ensures efficient transport of the enzyme to the lysosomes via the mannose 6-phosphate receptor.

The protein localises to the lysosome. The protein resides in the lysosome membrane. The enzyme catalyses Hydrolysis of terminal, non-reducing (1-&gt;4)-linked alpha-D-glucose residues with release of alpha-D-glucose.. Its function is as follows. Essential for the degradation of glycogen in lysosomes. Has highest activity on alpha-1,4-linked glycosidic linkages, but can also hydrolyze alpha-1,6-linked glucans. The sequence is that of Lysosomal alpha-glucosidase (GAA) from Homo sapiens (Human).